The following is a 271-amino-acid chain: Protein phosphatase 1 regulatory subunit 3B-B (271 aa).

The PP1-binding motif signature appears at 56–59 (RVSF). One can recognise a CBM21 domain in the interval 119–227 (RNRLKADSVC…SNKGLNYRIV (109 aa)).

As to quaternary structure, interacts with glycogen, PPP1CC catalytic subunit of PP1 and PYGL. Associates with glycogen particles. Forms complexes with debranching enzyme, glycogen phosphorylase, glycogen synthase and phosphorylase kinase which is necessary for its regulation of PP1 activity.

Its function is as follows. Acts as a glycogen-targeting subunit for phosphatase PP1. Facilitates interaction of the PP1 with enzymes of the glycogen metabolism and regulates its activity. Suppresses the rate at which PP1 dephosphorylates (inactivates) glycogen phosphorylase and enhances the rate at which it activates glycogen synthase and therefore limits glycogen breakdown. The sequence is that of Protein phosphatase 1 regulatory subunit 3B-B (ppp1r3b-b) from Xenopus laevis (African clawed frog).